Here is an 894-residue protein sequence, read N- to C-terminus: Low-affinity phosphate transporter PHO91 (894 aa).

The region spanning 1 to 256 is the SPX domain; that stretch reads MKFSHSLQFN…NTNLKQNYLN (256 aa). Disordered regions lie at residues 124-160 and 293-321; these read QHQL…LTDM and RPSN…EDGN. Residues 132–144 show a composition bias toward basic residues; sequence RNRKSKSQQRQRR. Residues 151–160 show a composition bias toward polar residues; sequence TDSNPSLTDM. 3 positions are modified to phosphoserine: S295, S311, and S312. 13 consecutive transmembrane segments (helical) span residues 430 to 450, 474 to 494, 511 to 531, 557 to 577, 602 to 622, 642 to 662, 682 to 702, 706 to 726, 738 to 758, 777 to 797, 799 to 819, 824 to 844, and 874 to 894; these read LKFL…LTPF, TIPL…FPVI, FILS…FTLA, FILL…SNVA, ALIL…PIAS, FMIA…LLII, FTLK…LWCL, ISGI…VFFG, FMWT…AVSS, PIFI…TFVS, TVAA…LPSG, LLIV…TSGF, and SLLS…VMGF.

Belongs to the CitM (TC 2.A.11) transporter family. Post-translationally, ubiquitinated by RSP5. RSP5-mediated ubiquitination initiates internalization and degradation by the endocytic pathway.

It localises to the vacuole membrane. In terms of biological role, vacuolar phosphate transporter that probably exports phosphate from the vacuolar lumen to the cytosol. In Saccharomyces cerevisiae (strain ATCC 204508 / S288c) (Baker's yeast), this protein is Low-affinity phosphate transporter PHO91 (PHO91).